The following is a 701-amino-acid chain: F-box/LRR-repeat protein 17 (701 aa).

A compositionally biased stretch (basic and acidic residues) spans 1-11 (MGHLLSKEPRN). Disordered regions lie at residues 1-20 (MGHLLSKEPRNRPSQKRPRC), 72-94 (APAGPEEEPPLSPPPRDGAYAAA), and 227-300 (GGGG…DADC). The segment covering 227–237 (GGGGGPAGGGA) has biased composition (gly residues). Residues 252 to 264 (EQPPQPLCPPPSS) are compositionally biased toward pro residues. Positions 318–365 (TPDINQLPPSILLKIFSNLSLDERCLSASLVCKYWRDLCLDFQFWKQL) constitute an F-box domain.

This sequence belongs to the FBXL17 family. In terms of assembly, part of the SCF (SKP1-CUL1-F-box) E3 ubiquitin-protein ligase complex SCF(FBXL17) composed of CUL1, SKP1, RBX1 and FBXL17. Interacts with BTB domain-containing proteins such as KLHL12, BCL6 and BACH1; specifically recognizes and binds a conserved degron of non-consecutive residues present at the interface of BTB dimers of aberrant composition. Interacts with SUFU. Interacts with PRMT1.

It localises to the cytoplasm. It is found in the nucleus. Substrate-recognition component of the SCF(FBXL17) E3 ubiquitin ligase complex, a key component of a quality control pathway required to ensure functional dimerization of BTB domain-containing proteins (dimerization quality control, DQC). FBXL17 specifically recognizes and binds a conserved degron of non-consecutive residues present at the interface of BTB dimers of aberrant composition: aberrant BTB dimer are then ubiquitinated by the SCF(FBXL17) complex and degraded by the proteasome. The ability of the SCF(FBXL17) complex to eliminate compromised BTB dimers is required for the differentiation and survival of neural crest and neuronal cells. The SCF(FBXL17) complex mediates ubiquitination and degradation of BACH1. The SCF(FBXL17) complex is also involved in the regulation of the hedgehog/smoothened (Hh) signaling pathway by mediating the ubiquitination and degradation of SUFU, allowing the release of GLI1 from SUFU for proper Hh signal transduction. The SCF(FBXL17) complex mediates ubiquitination and degradation of PRMT1. In Homo sapiens (Human), this protein is F-box/LRR-repeat protein 17.